Reading from the N-terminus, the 157-residue chain is MGVIEFLFALAQDMILAAIPAVGFAMVFNVPVRALRWCALLGAIGHGSRMILMTSGLNIEWSTFMASMLVGTIGIQWSRWYLAHPKVFTVAAVIPMFPGISAYTAMISAVKISQLGYSESLMITLLTNFLTASSIVGALSIGLSIPGLWLYRKRPRV.

4 consecutive transmembrane segments (helical) span residues 8–28 (FALAQDMILAAIPAVGFAMVF), 50–70 (MILMTSGLNIEWSTFMASMLV), 87–107 (VFTVAAVIPMFPGISAYTAMI), and 129–149 (FLTASSIVGALSIGLSIPGLW).

The protein belongs to the ThrE exporter (TC 2.A.79) family. The transporter is composed of YjjB and YjjP.

The protein resides in the cell inner membrane. Functionally, involved in succinate export with YjjP. Both proteins are required for export. In Escherichia coli (strain SE11), this protein is Probable succinate transporter subunit YjjB.